Here is a 464-residue protein sequence, read N- to C-terminus: tRNA(Ile)-lysidine synthase (464 aa).

ATP is bound at residue 30–35 (SGGVDS).

This sequence belongs to the tRNA(Ile)-lysidine synthase family.

Its subcellular location is the cytoplasm. The catalysed reaction is cytidine(34) in tRNA(Ile2) + L-lysine + ATP = lysidine(34) in tRNA(Ile2) + AMP + diphosphate + H(+). Its function is as follows. Ligates lysine onto the cytidine present at position 34 of the AUA codon-specific tRNA(Ile) that contains the anticodon CAU, in an ATP-dependent manner. Cytidine is converted to lysidine, thus changing the amino acid specificity of the tRNA from methionine to isoleucine. The protein is tRNA(Ile)-lysidine synthase of Shewanella oneidensis (strain ATCC 700550 / JCM 31522 / CIP 106686 / LMG 19005 / NCIMB 14063 / MR-1).